Reading from the N-terminus, the 666-residue chain is Transketolase (666 aa).

His28 is a substrate binding site. Thiamine diphosphate contacts are provided by residues His68 and 116–118; that span reads GPL. A Mg(2+)-binding site is contributed by Asp157. Thiamine diphosphate-binding residues include Gly158 and Asn187. Residues Asn187 and Ile189 each coordinate Mg(2+). Substrate is bound by residues His262, Arg356, and Ser383. A thiamine diphosphate-binding site is contributed by His262. Glu410 functions as the Proton donor in the catalytic mechanism. A thiamine diphosphate-binding site is contributed by Phe436. Substrate-binding residues include His460, Asp468, and Arg519.

Belongs to the transketolase family. As to quaternary structure, homodimer. Requires Mg(2+) as cofactor. It depends on Ca(2+) as a cofactor. Mn(2+) is required as a cofactor. Co(2+) serves as cofactor. The cofactor is thiamine diphosphate.

The enzyme catalyses D-sedoheptulose 7-phosphate + D-glyceraldehyde 3-phosphate = aldehydo-D-ribose 5-phosphate + D-xylulose 5-phosphate. Functionally, catalyzes the transfer of a two-carbon ketol group from a ketose donor to an aldose acceptor, via a covalent intermediate with the cofactor thiamine pyrophosphate. This is Transketolase (tkt) from Halalkalibacterium halodurans (strain ATCC BAA-125 / DSM 18197 / FERM 7344 / JCM 9153 / C-125) (Bacillus halodurans).